We begin with the raw amino-acid sequence, 114 residues long: MNSYLLLLMVSLLTCIGQLCQKQAAQCWEQPQARRLNLTLRWLAIAVVSLGLGMLLWLRLLQQLPLSVAYPMLSFNFVLVTLAAQLFYGEKATLRHWLGVAAIIFGILLMSWHL.

A run of 3 helical transmembrane segments spans residues 38-58 (LTLR…LLWL), 64-84 (LPLS…TLAA), and 94-114 (LRHW…SWHL). Residues 43 to 112 (LAIAVVSLGL…IIFGILLMSW (70 aa)) form the EamA domain.

This sequence belongs to the ArnE family. As to quaternary structure, heterodimer of ArnE and ArnF.

The protein localises to the cell inner membrane. It functions in the pathway bacterial outer membrane biogenesis; lipopolysaccharide biosynthesis. Functionally, translocates 4-amino-4-deoxy-L-arabinose-phosphoundecaprenol (alpha-L-Ara4N-phosphoundecaprenol) from the cytoplasmic to the periplasmic side of the inner membrane. The sequence is that of Probable 4-amino-4-deoxy-L-arabinose-phosphoundecaprenol flippase subunit ArnE from Yersinia pseudotuberculosis serotype O:1b (strain IP 31758).